The following is a 310-amino-acid chain: Ribonuclease Z (310 aa).

His60, His62, Asp64, His65, His140, Asp209, and His269 together coordinate Zn(2+). The Proton acceptor role is filled by Asp64.

Belongs to the RNase Z family. As to quaternary structure, homodimer. Zn(2+) is required as a cofactor.

The enzyme catalyses Endonucleolytic cleavage of RNA, removing extra 3' nucleotides from tRNA precursor, generating 3' termini of tRNAs. A 3'-hydroxy group is left at the tRNA terminus and a 5'-phosphoryl group is left at the trailer molecule.. In terms of biological role, zinc phosphodiesterase, which displays some tRNA 3'-processing endonuclease activity. Probably involved in tRNA maturation, by removing a 3'-trailer from precursor tRNA. This is Ribonuclease Z from Methanococcus maripaludis (strain C7 / ATCC BAA-1331).